The following is a 233-amino-acid chain: Urease accessory protein UreF (233 aa).

This sequence belongs to the UreF family. UreD, UreF and UreG form a complex that acts as a GTP-hydrolysis-dependent molecular chaperone, activating the urease apoprotein by helping to assemble the nickel containing metallocenter of UreC. The UreE protein probably delivers the nickel.

Its subcellular location is the cytoplasm. Required for maturation of urease via the functional incorporation of the urease nickel metallocenter. The polypeptide is Urease accessory protein UreF (Polaromonas sp. (strain JS666 / ATCC BAA-500)).